The chain runs to 243 residues: Adenylate dimethylallyltransferase (243 aa).

It belongs to the isopentenyl transferase family.

It carries out the reaction dimethylallyl diphosphate + AMP = N(6)-(dimethylallyl)adenosine 5'-phosphate + diphosphate. Functionally, transfers dimethylallyl groups to AMP as part of the biosynthesis of cytokinin phytohormones. The protein is Adenylate dimethylallyltransferase (tzs) of Rhizobium rhizogenes (Agrobacterium rhizogenes).